Here is a 435-residue protein sequence, read N- to C-terminus: Serine--tRNA ligase (435 aa).

T237–E239 contacts L-serine. Residue R268–E270 participates in ATP binding. E291 serves as a coordination point for L-serine. E355 to S358 serves as a coordination point for ATP. S390 provides a ligand contact to L-serine.

It belongs to the class-II aminoacyl-tRNA synthetase family. Type-1 seryl-tRNA synthetase subfamily. Homodimer. The tRNA molecule binds across the dimer.

Its subcellular location is the cytoplasm. The catalysed reaction is tRNA(Ser) + L-serine + ATP = L-seryl-tRNA(Ser) + AMP + diphosphate + H(+). It catalyses the reaction tRNA(Sec) + L-serine + ATP = L-seryl-tRNA(Sec) + AMP + diphosphate + H(+). It functions in the pathway aminoacyl-tRNA biosynthesis; selenocysteinyl-tRNA(Sec) biosynthesis; L-seryl-tRNA(Sec) from L-serine and tRNA(Sec): step 1/1. In terms of biological role, catalyzes the attachment of serine to tRNA(Ser). Is also able to aminoacylate tRNA(Sec) with serine, to form the misacylated tRNA L-seryl-tRNA(Sec), which will be further converted into selenocysteinyl-tRNA(Sec). The polypeptide is Serine--tRNA ligase (Lactobacillus delbrueckii subsp. bulgaricus (strain ATCC BAA-365 / Lb-18)).